The following is a 279-amino-acid chain: Isopentenyl-diphosphate delta-isomerase idi1 (279 aa).

A substrate-binding site is contributed by Lys78. His82 and His93 together coordinate Mg(2+). Residues 91-249 (LLHRAFSVFL…GLKFTPWFKL (159 aa)) enclose the Nudix hydrolase domain. Substrate is bound by residues Gln111 and Lys116. Cys128 is an active-site residue. Ser129 is a substrate binding site. The short motif at 129–162 (SHPLGIPGETGAELDAAVLGVKRAAQRKLDQELG) is the Nudix box element. Residues Glu191 and Glu193 each contribute to the Mg(2+) site. Residue Glu193 is part of the active site.

Belongs to the IPP isomerase type 1 family. It depends on Mg(2+) as a cofactor.

It carries out the reaction isopentenyl diphosphate = dimethylallyl diphosphate. It functions in the pathway isoprenoid biosynthesis; dimethylallyl diphosphate biosynthesis; dimethylallyl diphosphate from isopentenyl diphosphate: step 1/1. Functionally, isopentenyl-diphosphate delta-isomerase; part of the second module of ergosterol biosynthesis pathway that includes the middle steps of the pathway. Idi1 catalyzes the 1,3-allylic rearrangement of isopentenyl (IPP) to its highly electrophilic allylic isomer, dimethylallyl diphosphate (DMAPP). The second module is carried out in the vacuole and involves the formation of farnesyl diphosphate, which is also an important intermediate in the biosynthesis of ubiquinone, dolichol, heme and prenylated proteins. Activity by the mevalonate kinase erg12 (AFUA_4G07780) first converts mevalonate into 5-phosphomevalonate. 5-phosphomevalonate is then further converted to 5-diphosphomevalonate by the phosphomevalonate kinase erg8 (AFUA_5G10680). The diphosphomevalonate decarboxylase mvd1 (AFUA_4G07130) then produces isopentenyl diphosphate. The isopentenyl-diphosphate delta-isomerase idi1 (AFUA_6G11160) then catalyzes the 1,3-allylic rearrangement of the homoallylic substrate isopentenyl (IPP) to its highly electrophilic allylic isomer, dimethylallyl diphosphate (DMAPP). Finally the farnesyl diphosphate synthase erg20 (AFUA_5G02450) catalyzes the sequential condensation of isopentenyl pyrophosphate with dimethylallyl pyrophosphate, and then with the resultant geranylpyrophosphate to the ultimate product farnesyl pyrophosphate. The chain is Isopentenyl-diphosphate delta-isomerase idi1 from Aspergillus fumigatus (strain ATCC MYA-4609 / CBS 101355 / FGSC A1100 / Af293) (Neosartorya fumigata).